A 505-amino-acid polypeptide reads, in one-letter code: AMP phosphorylase (505 aa).

AMP is bound by residues Gly-170, 196–201 (SRAITS), and Thr-205. Asp-258 serves as the catalytic Proton donor. AMP is bound by residues Ser-266 and Lys-290.

This sequence belongs to the thymidine/pyrimidine-nucleoside phosphorylase family. Type 2 subfamily.

It carries out the reaction AMP + phosphate = alpha-D-ribose 1,5-bisphosphate + adenine. The catalysed reaction is CMP + phosphate = cytosine + alpha-D-ribose 1,5-bisphosphate. The enzyme catalyses UMP + phosphate = alpha-D-ribose 1,5-bisphosphate + uracil. Functionally, catalyzes the conversion of AMP and phosphate to adenine and ribose 1,5-bisphosphate (R15P). Exhibits phosphorylase activity toward CMP and UMP in addition to AMP. Functions in an archaeal AMP degradation pathway, together with R15P isomerase and RubisCO. In Methanococcus maripaludis (strain DSM 14266 / JCM 13030 / NBRC 101832 / S2 / LL), this protein is AMP phosphorylase.